The primary structure comprises 505 residues: Maturase K (505 aa).

The protein belongs to the intron maturase 2 family. MatK subfamily.

The protein localises to the plastid. It localises to the chloroplast. In terms of biological role, usually encoded in the trnK tRNA gene intron. Probably assists in splicing its own and other chloroplast group II introns. This Chiococca alba (West Indian milkberry) protein is Maturase K.